The sequence spans 288 residues: Pyridoxal kinase PdxY (288 aa).

Substrate contacts are provided by residues S12 and T47 to Q48. ATP-binding positions include D114, E151, K184, and R211–L214. D225 serves as a coordination point for substrate.

The protein belongs to the pyridoxine kinase family. PdxY subfamily. Homodimer. The cofactor is Mg(2+).

The catalysed reaction is pyridoxal + ATP = pyridoxal 5'-phosphate + ADP + H(+). It functions in the pathway cofactor metabolism; pyridoxal 5'-phosphate salvage; pyridoxal 5'-phosphate from pyridoxal: step 1/1. Its function is as follows. Pyridoxal kinase involved in the salvage pathway of pyridoxal 5'-phosphate (PLP). Catalyzes the phosphorylation of pyridoxal to PLP. The protein is Pyridoxal kinase PdxY of Pseudomonas syringae pv. syringae (strain B728a).